The chain runs to 128 residues: L-ectoine synthase (128 aa).

The protein belongs to the ectoine synthase family.

It catalyses the reaction (2S)-4-acetamido-2-aminobutanoate = L-ectoine + H2O. The protein operates within amine and polyamine biosynthesis; ectoine biosynthesis; L-ectoine from L-aspartate 4-semialdehyde: step 3/3. Its function is as follows. Catalyzes the circularization of gamma-N-acetyl-alpha,gamma-diaminobutyric acid (ADABA) to ectoine (1,4,5,6-tetrahydro-2-methyl-4-pyrimidine carboxylic acid), which is an excellent osmoprotectant. The sequence is that of L-ectoine synthase from Vibrio campbellii (strain ATCC BAA-1116).